The following is a 273-amino-acid chain: Dermonecrotic toxin LapSicTox-alphaII1 (273 aa).

H5 is an active-site residue. Mg(2+) is bound by residues E25 and D27. The active-site Nucleophile is the H41. Disulfide bonds link C45-C51 and C47-C191. Residue D85 participates in Mg(2+) binding.

It belongs to the arthropod phospholipase D family. Class II subfamily. The cofactor is Mg(2+). Expressed by the venom gland.

The protein localises to the secreted. The catalysed reaction is an N-(acyl)-sphingosylphosphocholine = an N-(acyl)-sphingosyl-1,3-cyclic phosphate + choline. It catalyses the reaction an N-(acyl)-sphingosylphosphoethanolamine = an N-(acyl)-sphingosyl-1,3-cyclic phosphate + ethanolamine. The enzyme catalyses a 1-acyl-sn-glycero-3-phosphocholine = a 1-acyl-sn-glycero-2,3-cyclic phosphate + choline. It carries out the reaction a 1-acyl-sn-glycero-3-phosphoethanolamine = a 1-acyl-sn-glycero-2,3-cyclic phosphate + ethanolamine. Its function is as follows. Dermonecrotic toxins cleave the phosphodiester linkage between the phosphate and headgroup of certain phospholipids (sphingolipid and lysolipid substrates), forming an alcohol (often choline) and a cyclic phosphate. This toxin acts on sphingomyelin (SM). It may also act on ceramide phosphoethanolamine (CPE), lysophosphatidylcholine (LPC) and lysophosphatidylethanolamine (LPE), but not on lysophosphatidylserine (LPS), and lysophosphatidylglycerol (LPG). It acts by transphosphatidylation, releasing exclusively cyclic phosphate products as second products. Induces dermonecrosis, hemolysis, increased vascular permeability, edema, inflammatory response, and platelet aggregation. The protein is Dermonecrotic toxin LapSicTox-alphaII1 of Loxosceles apachea (Apache recluse spider).